A 301-amino-acid chain; its full sequence is Ribonuclease Z (301 aa).

Histidine 61, histidine 63, aspartate 65, histidine 66, histidine 140, aspartate 211, and histidine 269 together coordinate Zn(2+). The active-site Proton acceptor is the aspartate 65.

The protein belongs to the RNase Z family. In terms of assembly, homodimer. It depends on Zn(2+) as a cofactor.

It carries out the reaction Endonucleolytic cleavage of RNA, removing extra 3' nucleotides from tRNA precursor, generating 3' termini of tRNAs. A 3'-hydroxy group is left at the tRNA terminus and a 5'-phosphoryl group is left at the trailer molecule.. Its function is as follows. Zinc phosphodiesterase, which displays some tRNA 3'-processing endonuclease activity. Probably involved in tRNA maturation, by removing a 3'-trailer from precursor tRNA. The chain is Ribonuclease Z from Bradyrhizobium diazoefficiens (strain JCM 10833 / BCRC 13528 / IAM 13628 / NBRC 14792 / USDA 110).